A 286-amino-acid chain; its full sequence is Mycolic acid methyltransferase MmaA1 (286 aa).

Residues 32 to 33, 71 to 73, 93 to 98, and 122 to 123 each bind S-adenosyl-L-methionine; these read YT, GCG, TLSRNH, and WE. Cys268 is a catalytic residue.

The protein belongs to the CFA/CMAS family.

Its pathway is lipid metabolism; mycolic acid biosynthesis. Its function is as follows. Involved in the conversion of a cis-olefin into a trans-olefin with concomitant introduction of an allylic methyl branch at the proximal position of the precursor to both the methoxy and ketomycolic acids. It directly affects the cis- to trans ratio and indirectly affects the keto to methoxy ratio. The sequence is that of Mycolic acid methyltransferase MmaA1 (cmaD) from Mycobacterium bovis (strain ATCC BAA-935 / AF2122/97).